A 43-amino-acid chain; its full sequence is Protein PsbN (43 aa).

Residues 5 to 27 (TLVAIFISCSLVSFTGYALYTAF) form a helical membrane-spanning segment.

Belongs to the PsbN family.

It localises to the plastid. Its subcellular location is the chloroplast thylakoid membrane. Functionally, may play a role in photosystem I and II biogenesis. In Exsertotheca crispa (Moss), this protein is Protein PsbN.